Consider the following 203-residue polypeptide: Type III effector protein HopBF1 (203 aa).

Residues 1-23 are disordered; it reads MFNVSNNVAPSRYQGPSSTSVTP. ATP contacts are provided by Ser40, Gln41, Lys42, Asp107, Ile109, and Asp114. Asp155 is a catalytic residue. Position 157 (Gln157) interacts with ATP.

It belongs to the HopBF1 family.

Its subcellular location is the secreted. The protein resides in the host cell. It carries out the reaction L-seryl-[protein] + ATP = O-phospho-L-seryl-[protein] + ADP + H(+). Functionally, effector protein that targets and inactivates the eukaryotic molecular chaperone HSP90 during infection. HopBF1 is recognized by HSP90 as a host client. As a result, HopBF1 phosphorylates HSP90, leading to the inactivation of the HSP90 ATPase activity and chaperone function. In vitro, can phosphorylate the recombinant yeast HSP82 (HSP90) and human HSP 90-beta on Ser-108. This chain is Type III effector protein HopBF1, found in Ewingella americana (strain ATCC 33852 / DSM 4580 / CCUG 14506 / JCM 5911 / LMG 7869 / NCTC 12157 / CDC 1468-78).